The primary structure comprises 186 residues: Putative thiamine-phosphate synthase 2 (186 aa).

4-amino-2-methyl-5-(diphosphooxymethyl)pyrimidine is bound by residues 35-39 (QLREK) and N67. E68 contacts Mg(2+). S105 contributes to the 4-amino-2-methyl-5-(diphosphooxymethyl)pyrimidine binding site. 131–133 (TSS) is a binding site for 2-[(2R,5Z)-2-carboxy-4-methylthiazol-5(2H)-ylidene]ethyl phosphate. H134 contacts 4-amino-2-methyl-5-(diphosphooxymethyl)pyrimidine. 2-[(2R,5Z)-2-carboxy-4-methylthiazol-5(2H)-ylidene]ethyl phosphate contacts are provided by residues G161 and 181 to 182 (IS).

It belongs to the thiamine-phosphate synthase family. It depends on Mg(2+) as a cofactor.

It carries out the reaction 2-[(2R,5Z)-2-carboxy-4-methylthiazol-5(2H)-ylidene]ethyl phosphate + 4-amino-2-methyl-5-(diphosphooxymethyl)pyrimidine + 2 H(+) = thiamine phosphate + CO2 + diphosphate. It catalyses the reaction 2-(2-carboxy-4-methylthiazol-5-yl)ethyl phosphate + 4-amino-2-methyl-5-(diphosphooxymethyl)pyrimidine + 2 H(+) = thiamine phosphate + CO2 + diphosphate. The enzyme catalyses 4-methyl-5-(2-phosphooxyethyl)-thiazole + 4-amino-2-methyl-5-(diphosphooxymethyl)pyrimidine + H(+) = thiamine phosphate + diphosphate. Its pathway is cofactor biosynthesis; thiamine diphosphate biosynthesis; thiamine phosphate from 4-amino-2-methyl-5-diphosphomethylpyrimidine and 4-methyl-5-(2-phosphoethyl)-thiazole: step 1/1. Functionally, condenses 4-methyl-5-(beta-hydroxyethyl)thiazole monophosphate (THZ-P) and 2-methyl-4-amino-5-hydroxymethyl pyrimidine pyrophosphate (HMP-PP) to form thiamine monophosphate (TMP). The sequence is that of Putative thiamine-phosphate synthase 2 (thiE2) from Aquifex aeolicus (strain VF5).